The primary structure comprises 473 residues: Putative tyrosine recombinase XerC (473 aa).

The 79-residue stretch at 4–82 (MTLPELTQEY…HLRTVYRYAM (79 aa)) folds into the Core-binding (CB) domain. The Tyr recombinase domain maps to 118–305 (RNWLRFLVQE…DYDLMREVMN (188 aa)). Active-site residues include Arg156, Lys183, His256, Arg259, and His283. Tyr292 (O-(3'-phospho-DNA)-tyrosine intermediate) is an active-site residue. The segment covering 341-352 (SGTELQPATTES) has biased composition (polar residues). A disordered region spans residues 341–365 (SGTELQPATTESSEAKKADDTASNP).

It belongs to the 'phage' integrase family.

The protein resides in the cytoplasm. Its function is as follows. Site-specific tyrosine recombinase, which acts by catalyzing the cutting and rejoining of the recombining DNA molecules. This is Putative tyrosine recombinase XerC from Pseudomonas syringae.